A 780-amino-acid chain; its full sequence is MATSNLLKNKGSLQFEDKWDFMRPIVLKLLRQESVTKQQWFDLFSDVHAVCLWDDKGPAKIHQALKEDILEFIKQAQARVLSHQDDTALLKAYIVEWRKFFTQCDILPKPFCQLEITLMGKQGSNKKSNVEDSIVRKLMLDTWNESIFSNIKNRLQDSAMKLVHAERLGEAFDSQLVIGVRESYVNLCSNPEDKLQIYRDNFEKAYLDSTERFYRTQAPSYLQQNGVQNYMKYADAKLKEEEKRALRYLETRRECNSVEALMECCVNALVTSFKETILAECQGMIKRNETEKLHLMFSLMDKVPNGIEPMLKDLEEHIISAGLADMVAAAETITTDSEKYVEQLLTLFNRFSKLVKEAFQDDPRFLTARDKAYKAVVNDATIFKLELPLKQKGVGLKTQPESKCPELLANYCDMLLRKTPLSKKLTSEEIEAKLKEVLLVLKYVQNKDVFMRYHKAHLTRRLILDISADSEIEENMVEWLREVGMPADYVNKLARMFQDIKVSEDLNQAFKEMHKNNKLALPADSVNIKILNAGAWSRSSEKVFVSLPTELEDLIPEVEEFYKKNHSGRKLHWHHLMSNGIITFKNEVGQYDLEVTTFQLAVLFAWNQRPREKISFENLKLATELPDAELRRTLWSLVAFPKLKRQVLLYEPQVNSPKDFTEGTLFSVNQEFSLIKNAKVQKRGKINLIGRLQLTTERMREEENEGIVQLRILRTQEAIIQIMKMRKKISNAQLQTELVEILKNMFLPQKKMIKEQIEWLIEHKYIRRDESDINTFIYMA.

Ser34 carries the post-translational modification Phosphoserine. At Thr210 the chain carries Phosphothreonine. The 62-residue stretch at 711 to 772 (RILRTQEAII…HKYIRRDESD (62 aa)) folds into the Cullin neddylation domain. Residue Lys724 forms a Glycyl lysine isopeptide (Lys-Gly) (interchain with G-Cter in NEDD8) linkage.

Belongs to the cullin family. As to quaternary structure, component of multiple cullin-5-RING E3 ubiquitin-protein ligase complexes (ECS complexes, also named CRL5 complexes) formed of CUL5, Elongin BC (ELOB and ELOC), RNF7/RBX2 and a variable SOCS box domain-containing protein as substrate-specific recognition component. CUL5-containing ECS complexes specifically contain RNF7/RBX2, and not RBX1, as catalytic subunit. Component of the ECS(ASB2) complex with the substrate recognition component ASB2. Component of the ECS(ASB6) complex with the substrate recognition component ASB6. Component of the ECS(ASB7) complex with the substrate recognition component ASB7. Component of the ECS(ASB9) complex with the substrate recognition component ASB9. Component of the ECS(ASB11) complex with the substrate recognition component ASB11. Component of the ECS(ASB12) complex with the substrate recognition component ASB12. Component of the ECS(LRRC41) complex with the substrate recognition component LRRC41. Component of the ECS(SOCS1) complex with the substrate recognition component SOCS1. Component of the ECS(SOCS2) complex with the substrate recognition component SOCS2. Component of the ECS(WSB1) complex with the substrate recognition subunit WSB1. Component of the ECS(SOCS3) complex with the substrate recognition component SOCS3. Component of the ECS(SOCS7) complex with the substrate recognition component SOCS7. Component of the ECS(SPSB1) complex with the substrate recognition component SPSB1. Component of the ECS(SPSB3) complex with the substrate recognition component SPSB3. Component of the ECS(SPSB2) complex with the substrate recognition component SPSB2. Component of the ECS(SPSB4) complex with the substrate recognition component SPSB4. Component of the ECS(RAB40) complex with the substrate recognition subunit RAB40A, RAB40B or RAB40C. Component of the ECS(KLHDC1) complex with the substrate recognition component KLHDC1. Component of the ECS(PCMTD1) complex with the substrate recognition subunit PCMTD1. May also form complexes containing RBX1 and ELOA or VHL; additional evidence is however required to confirm this result in vivo. Interacts (when neddylated) with ARIH2; leading to activate the E3 ligase activity of ARIH2. Interacts with ERCC6; the interaction is induced by DNA damaging agents or inhibitors of RNA polymerase II elongation. Interacts with ELOA (via the BC-box). Interacts (unneddylated form) with DCUN1D1, DCUN1D2, DCUN1D3, DCUN1D4 and DCUN1D5; these interactions promote the cullin neddylation. In terms of assembly, (Microbial infection) Interacts (via the substrate recognition component) with HIV-1 Vif; forming an active cullin-5-RING E3 ubiquitin-protein ligase complex (ECS complex). (Microbial infection) Interacts (via the substrate recognition component) with human adenovirus 5 proteins E1B-55K and E4-orf6. As to quaternary structure, (Microbial infection) Interacts with herpes virus 8 protein LANA1; this interaction promotes the degradation of NF-kappa-B component RELA. In terms of assembly, (Microbial infection) Interacts with molluscum contagiosum virus protein MC132; this interaction promotes the degradation of NF-kappa-B component RELA. Neddylated; which enhances the ubiquitination activity of ECS complexes and prevents binding of the inhibitor CAND1. Deneddylated via its interaction with the COP9 signalosome (CSN).

Its subcellular location is the nucleus. It functions in the pathway protein modification; protein ubiquitination. Functionally, core component of multiple cullin-5-RING E3 ubiquitin-protein ligase complexes (ECS complexes, also named CRL5 complexes), which mediate the ubiquitination and subsequent proteasomal degradation of target proteins. Acts a scaffold protein that contributes to catalysis through positioning of the substrate and the ubiquitin-conjugating enzyme. The functional specificity of the E3 ubiquitin-protein ligase complex depends on the variable SOCS box-containing substrate recognition component. Acts as a key regulator of neuron positioning during cortex development: component of various SOCS-containing ECS complexes, such as the ECS(SOCS7) complex, that regulate reelin signaling by mediating ubiquitination and degradation of DAB1. ECS(SOCS1) seems to direct ubiquitination of JAK2. The ECS(SOCS2) complex mediates the ubiquitination and subsequent proteasomal degradation of phosphorylated EPOR and GHR. The ECS(SPSB3) complex catalyzes ubiquitination of nuclear CGAS. ECS(KLHDC1) complex is part of the DesCEND (destruction via C-end degrons) pathway and mediates ubiquitination and degradation of truncated SELENOS selenoprotein produced by failed UGA/Sec decoding, which ends with a glycine. The ECS(ASB9) complex mediates ubiquitination and degradation of CKB. As part of some ECS complex, promotes 'Lys-11'-linked ubiquitination and degradation of BTRC. As part of a multisubunit ECS complex, polyubiquitinates monoubiquitinated POLR2A. As part of the ECS(RAB40C) complex, mediates ANKRD28 ubiquitination and degradation, thereby inhibiting protein phosphatase 6 (PP6) complex activity and focal adhesion assembly during cell migration. As part of the ECS(RAB40A) complex, mediates RHOU 'Lys-48'-linked ubiquitination and degradation, thus inhibiting focal adhesion disassembly during cell migration. As part of the ECS(RAB40B) complex, mediates LIMA1/EPLIN and RAP2 ubiquitination, thereby regulating actin cytoskeleton dynamics and stress fiber formation during cell migration. May form a cell surface vasopressin receptor. In terms of biological role, (Microbial infection) Following infection by HIV-1 virus, CUL5 associates with HIV-1 Vif proteins and forms a cullin-5-RING E3 ubiquitin-protein ligase complex (ECS complex) that catalyzes ubiquitination and degradation of APOBEC3F and APOBEC3G. The complex can also ubiquitinate APOBEC3H to some extent. Its function is as follows. (Microbial infection) Seems to be involved in proteasomal degradation of p53/TP53 stimulated by adenovirus E1B-55 kDa protein. This chain is Cullin-5, found in Homo sapiens (Human).